The chain runs to 443 residues: 23S rRNA (uracil(1939)-C(5))-methyltransferase RlmD (443 aa).

The TRAM domain occupies 12–70; it reads AKKLSQKIALKVQRLDHLGAGIAEHQGKVVFIPGALPGETVEVQLTEQKKNYARAKLQR. [4Fe-4S] cluster is bound by residues cysteine 83, cysteine 89, cysteine 92, and cysteine 171. S-adenosyl-L-methionine-binding residues include glutamine 276, phenylalanine 305, asparagine 310, glutamate 326, aspartate 353, and aspartate 373. Cysteine 399 acts as the Nucleophile in catalysis.

The protein belongs to the class I-like SAM-binding methyltransferase superfamily. RNA M5U methyltransferase family. RlmD subfamily.

It catalyses the reaction uridine(1939) in 23S rRNA + S-adenosyl-L-methionine = 5-methyluridine(1939) in 23S rRNA + S-adenosyl-L-homocysteine + H(+). Catalyzes the formation of 5-methyl-uridine at position 1939 (m5U1939) in 23S rRNA. The chain is 23S rRNA (uracil(1939)-C(5))-methyltransferase RlmD from Shewanella amazonensis (strain ATCC BAA-1098 / SB2B).